A 441-amino-acid polypeptide reads, in one-letter code: GTPase Der (441 aa).

EngA-type G domains lie at 3-167 (PLIA…PNKT) and 176-351 (TRIA…EQFA). GTP is bound by residues 9–16 (GRPNVGKS), 56–60 (DTGGF), 119–122 (NKID), 182–189 (GRPNVGKS), 229–233 (DTAGI), and 294–297 (NKWD). Residues 352 to 436 (KRISTSDLNR…PMRLLFKGRE (85 aa)) form the KH-like domain.

It belongs to the TRAFAC class TrmE-Era-EngA-EngB-Septin-like GTPase superfamily. EngA (Der) GTPase family. As to quaternary structure, associates with the 50S ribosomal subunit.

Its function is as follows. GTPase that plays an essential role in the late steps of ribosome biogenesis. The polypeptide is GTPase Der (Geotalea daltonii (strain DSM 22248 / JCM 15807 / FRC-32) (Geobacter daltonii)).